The following is a 599-amino-acid chain: Sulfite reductase [NADPH] flavoprotein alpha-component (599 aa).

In terms of domain architecture, Flavodoxin-like spans isoleucine 64–valine 202. Residues serine 70 to alanine 75, serine 117 to glycine 120, and leucine 153 to cysteine 162 contribute to the FMN site. Residues aspartate 234–proline 448 enclose the FAD-binding FR-type domain. Residues threonine 322, alanine 356, arginine 386–serine 389, threonine 404–glycine 406, tyrosine 410, and glycine 419–serine 422 each bind FAD. NADP(+) is bound by residues serine 519–arginine 520, lysine 525–glutamine 529, and aspartate 561. Tyrosine 599 contacts FAD.

Belongs to the NADPH-dependent sulphite reductase flavoprotein subunit CysJ family. The protein in the N-terminal section; belongs to the flavodoxin family. It in the C-terminal section; belongs to the flavoprotein pyridine nucleotide cytochrome reductase family. Alpha(8)-beta(8). The alpha component is a flavoprotein, the beta component is a hemoprotein. It depends on FAD as a cofactor. FMN serves as cofactor.

The catalysed reaction is hydrogen sulfide + 3 NADP(+) + 3 H2O = sulfite + 3 NADPH + 4 H(+). It functions in the pathway sulfur metabolism; hydrogen sulfide biosynthesis; hydrogen sulfide from sulfite (NADPH route): step 1/1. Functionally, component of the sulfite reductase complex that catalyzes the 6-electron reduction of sulfite to sulfide. This is one of several activities required for the biosynthesis of L-cysteine from sulfate. The flavoprotein component catalyzes the electron flow from NADPH -&gt; FAD -&gt; FMN to the hemoprotein component. The polypeptide is Sulfite reductase [NADPH] flavoprotein alpha-component (Shigella flexneri serotype 5b (strain 8401)).